We begin with the raw amino-acid sequence, 707 residues long: MSEQLRQTFANAKKENRNALVTFMTAGYPTVKDTVPILKGFQDGGVDIIELGMPFSDPIADGPTIQLSNTVALQNGVTLPQTLEMVSQARNEGVTVPIILMGYYNPILNYGEERFIQDAAKAGANGFIIVDLPPEEALKVRNYINDNGLSLIPLVAPSTTDERLELLSHIADSFVYVVSRMGTTGVQSSVASDLDELISRVRKYTKDTPLAVGFGVSTREHFQSVGSVADGVVIGSKIVTLCGDAPEGKRYDVAKEYVQGILNGAKHKVLSKDEFFAFQKESLKSANVKKEILDEFDENHKHPIRFGDFGGQYVPEALHACLRELEKGFDEAVADPTFWEDFKSLYSYIGRPSSLHKAERLTEHCQGAQIWLKREDLNHTGSHKINNALAQVLLAKRLGKKNVIAETGAGQHGVATATACAKFGLTCTVFMGAEDVRRQALNVFRMRILGAKVIAVTNGTKTLRDATSEAFRFWVTNLKTTYYVVGSAIGPHPYPTLVRTFQSVIGKETKEQFAAMNNGKLPDAVVACVGGGSNSTGMFSPFEHDTSVKLLGVEAGGDGVDTKFHSATLTAGRPGVFHGVKTYVLQDSDGQVHDTHSVSAGLDYPGVGPELAYWKSTGRAQFIAATDAQALLGFKLLSQLEGIIPALESSHAVYGACELAKTMKPDQHLVINISGRGDKDVQSVAEVLPKLGPKIGWDLRFEEDPSA.

The tryptophan synthase alpha chain stretch occupies residues methionine 1 to aspartate 297. Catalysis depends on proton acceptor residues glutamate 50 and aspartate 61. Residues glutamate 298 to alanine 707 are tryptophan synthase beta chain. An N6-(pyridoxal phosphate)lysine modification is found at lysine 384. 2 positions are modified to phosphoserine: serine 540 and serine 683.

The protein in the N-terminal section; belongs to the TrpA family. It in the C-terminal section; belongs to the TrpB family. The cofactor is pyridoxal 5'-phosphate.

It carries out the reaction (1S,2R)-1-C-(indol-3-yl)glycerol 3-phosphate + L-serine = D-glyceraldehyde 3-phosphate + L-tryptophan + H2O. The protein operates within amino-acid biosynthesis; L-tryptophan biosynthesis; L-tryptophan from chorismate: step 5/5. The polypeptide is Tryptophan synthase (TRP5) (Saccharomyces cerevisiae (strain ATCC 204508 / S288c) (Baker's yeast)).